The sequence spans 430 residues: Alpha-1,6-mannosyl-glycoprotein 2-beta-N-acetylglucosaminyltransferase (430 aa).

The Cytoplasmic portion of the chain corresponds to methionine 1–aspartate 12. Residues threonine 13 to valine 35 form a helical; Signal-anchor for type II membrane protein membrane-spanning segment. Residues proline 36–proline 430 lie on the Lumenal side of the membrane. N-linked (GlcNAc...) asparagine glycans are attached at residues asparagine 41 and asparagine 61. Substrate-binding positions include tyrosine 104–arginine 108 and aspartate 135. A disulfide bond links cysteine 177 and cysteine 188. Serine 205–histidine 209 contacts substrate. Position 237 (aspartate 237) interacts with Mn(2+). Cysteine 259 and cysteine 262 are joined by a disulfide. A glycan (N-linked (GlcNAc...) asparagine) is linked at asparagine 295. A disulfide bond links cysteine 310 and cysteine 414. Residue histidine 345 participates in Mn(2+) binding.

It belongs to the glycosyltransferase 16 (GT16) protein family. Mn(2+) is required as a cofactor.

It is found in the golgi apparatus membrane. The enzyme catalyses an N(4)-{beta-D-GlcNAc-(1-&gt;2)-alpha-D-Man-(1-&gt;3)-[alpha-D-Man-(1-&gt;6)]-beta-D-Man-(1-&gt;4)-beta-D-GlcNAc-(1-&gt;4)-beta-D-GlcNAc}-L-asparaginyl-[protein] + UDP-N-acetyl-alpha-D-glucosamine = N(4)-{beta-D-GlcNAc-(1-&gt;2)-alpha-D-Man-(1-&gt;3)-[beta-D-GlcNAc-(1-&gt;2)-alpha-D-Man-(1-&gt;6)]-beta-D-Man-(1-&gt;4)-beta-D-GlcNAc-(1-&gt;4)-beta-D-GlcNAc}-L-asparaginyl-[protein] + UDP + H(+). Its pathway is protein modification; protein glycosylation. Functionally, catalyzes an essential step in the conversion of oligo-mannose and hybrid to complex N-glycans. The protein is Alpha-1,6-mannosyl-glycoprotein 2-beta-N-acetylglucosaminyltransferase of Arabidopsis thaliana (Mouse-ear cress).